Consider the following 428-residue polypeptide: Adenylosuccinate synthetase (428 aa).

GTP-binding positions include Gly12 to Lys18 and Gly40 to Thr42. The active-site Proton acceptor is the Asp13. Mg(2+) contacts are provided by Asp13 and Gly40. IMP contacts are provided by residues Asp13–Lys16, Asn38–His41, Thr133, Arg147, Asn224, Thr239, and Arg303. The active-site Proton donor is His41. Thr299–Arg305 contributes to the substrate binding site. GTP contacts are provided by residues Arg305, Lys331 to Asp333, and Gly413 to Gly415.

The protein belongs to the adenylosuccinate synthetase family. As to quaternary structure, homodimer. The cofactor is Mg(2+).

It is found in the cytoplasm. It catalyses the reaction IMP + L-aspartate + GTP = N(6)-(1,2-dicarboxyethyl)-AMP + GDP + phosphate + 2 H(+). It functions in the pathway purine metabolism; AMP biosynthesis via de novo pathway; AMP from IMP: step 1/2. Plays an important role in the de novo pathway and in the salvage pathway of purine nucleotide biosynthesis. Catalyzes the first committed step in the biosynthesis of AMP from IMP. The chain is Adenylosuccinate synthetase from Coprinopsis cinerea (strain Okayama-7 / 130 / ATCC MYA-4618 / FGSC 9003) (Inky cap fungus).